The following is a 313-amino-acid chain: Probable WRKY transcription factor 41 (313 aa).

The segment at residues 135-203 is a DNA-binding region (WRKY); it reads GLEGPHDDIF…YRGTHTCSQG (69 aa).

The protein belongs to the WRKY group III family.

The protein localises to the nucleus. Functionally, transcription factor. Interacts specifically with the W box (5'-(T)TGAC[CT]-3'), a frequently occurring elicitor-responsive cis-acting element. This chain is Probable WRKY transcription factor 41 (WRKY41), found in Arabidopsis thaliana (Mouse-ear cress).